The following is a 334-amino-acid chain: HTH-type transcriptional repressor PurR (334 aa).

The HTH lacI-type domain occupies 2–56 (ATIKDVARLAGVSTTTVSHVINKTRFVAEATQEKVNKAVDELNYAPSAVARSLKC). The H-T-H motif DNA-binding region spans 4-23 (IKDVARLAGVSTTTVSHVIN). A DNA-binding region spans residues 48–56 (SAVARSLKC). Hypoxanthine-binding residues include F73, K189, F220, and D274.

In terms of assembly, homodimer.

It functions in the pathway purine metabolism; purine nucleotide biosynthesis [regulation]. Its function is as follows. Is the main repressor of the genes involved in the de novo synthesis of purine nucleotides, regulating purB, purC, purEK, purF, purHD, purL, purMN and guaBA expression. PurR is allosterically activated to bind its cognate DNA by binding the purine corepressors, hypoxanthine or guanine, thereby effecting transcription repression. The sequence is that of HTH-type transcriptional repressor PurR from Vibrio atlanticus (strain LGP32) (Vibrio splendidus (strain Mel32)).